Consider the following 258-residue polypeptide: Imidazole glycerol phosphate synthase subunit HisF (258 aa).

Active-site residues include D11 and D130.

It belongs to the HisA/HisF family. As to quaternary structure, heterodimer of HisH and HisF.

It localises to the cytoplasm. It carries out the reaction 5-[(5-phospho-1-deoxy-D-ribulos-1-ylimino)methylamino]-1-(5-phospho-beta-D-ribosyl)imidazole-4-carboxamide + L-glutamine = D-erythro-1-(imidazol-4-yl)glycerol 3-phosphate + 5-amino-1-(5-phospho-beta-D-ribosyl)imidazole-4-carboxamide + L-glutamate + H(+). The protein operates within amino-acid biosynthesis; L-histidine biosynthesis; L-histidine from 5-phospho-alpha-D-ribose 1-diphosphate: step 5/9. Functionally, IGPS catalyzes the conversion of PRFAR and glutamine to IGP, AICAR and glutamate. The HisF subunit catalyzes the cyclization activity that produces IGP and AICAR from PRFAR using the ammonia provided by the HisH subunit. This chain is Imidazole glycerol phosphate synthase subunit HisF, found in Yersinia pseudotuberculosis serotype O:1b (strain IP 31758).